The sequence spans 634 residues: MPSSVNRTSRTEPAGHHREFPLSLAAIDELVAEEEAEDARVLHLTANETVLSPRARAVLASPLTSRYLLEHLDMRGPSPARLGNLLLRGLDRIGTIEESATEVCRRLFGARYAEFRCLSGLHAMQTTFAALSRPGDTVMRVATKDGGHFLTELICRSFGRRSCTYVFDDTMTIDLERTREVVEKERPSLLFVDAMNYLFPFPIAELKAIAGDVPLVFDASHTLGLIAGGRFQDPLREGADLLQANTHKTFFGPQKGIILGNDRSLMEELGYTLSTGMVSSQHTASTVALLIALHEMWYDGREYAAQVIDNARRLAGALRDRGVPVVAEERGFTANHMFFVDTRPLGSGPAVIQRLVRAGVSANRAVAFNHLDTIRFGVQEITRRGYDHDDLDEAADLVAAVLLERQEPERIRPRVAELVGRRRTVRYTGDPASAAGPPARERYAPPTAPAGHPARPRWIGVRLTPLPEPVTEAECAGAQRLGRLAGAFPHQIDSSGNVSFTSTDGRLFVTGSGTYIKDLAPGDFVELTGAEGWTLHCRGDGPPSAEAYLHHLLRERVGARYVVHNHCIPGRALETSGALVIPPKEYGSVALAEAVADACQDSQVMYVRRHGLVFWAHSYDECLALIEDVRRITG.

Pyridoxal 5'-phosphate contacts are provided by tyrosine 67, histidine 221, and histidine 247. Lysine 248 carries the N6-(pyridoxal phosphate)lysine modification. A pyridoxal 5'-phosphate-binding site is contributed by arginine 375. Residues 428–456 (TGDPASAAGPPARERYAPPTAPAGHPARP) are disordered.

The protein belongs to the SHMT family. Requires pyridoxal 5'-phosphate as cofactor.

It carries out the reaction fluoroacetaldehyde + L-threonine = 4-fluoro-L-threonine + acetaldehyde. Its function is as follows. Transaldolase that catalyzes the final step in 4-fluorothreonine biosynthesis. Mediates a L-threonine/fluoroaceldehyde to 4-fluoro-L-threonine/acetaldehyde crossover reaction. Can also convert chloroacetaldehyde into 4-chloro-L-threonine. Does not use glycine as a substrate. This chain is Fluorothreonine transaldolase, found in Streptantibioticus cattleyicolor (Streptomyces cattleya).